Reading from the N-terminus, the 132-residue chain is Small ribosomal subunit protein uS19 (132 aa).

The protein belongs to the universal ribosomal protein uS19 family.

In terms of biological role, protein S19 forms a complex with S13 that binds strongly to the 16S ribosomal RNA. This Korarchaeum cryptofilum (strain OPF8) protein is Small ribosomal subunit protein uS19.